Consider the following 286-residue polypeptide: Quinone oxidoreductase 2 (286 aa).

NADP(+)-binding positions include 6 to 11 (GATGQL), Arg-33, 73 to 75 (SSS), 138 to 143 (GWYSEN), and Arg-171.

It belongs to the NmrA-type oxidoreductase family. In terms of assembly, monomer.

The enzyme catalyses a quinone + NADH + H(+) = a quinol + NAD(+). It catalyses the reaction a quinone + NADPH + H(+) = a quinol + NADP(+). Quinone oxidoreductase that may play some additional role beyond quinone reduction. Potential redox sensor protein. Overexpression induces retardation of growth. The polypeptide is Quinone oxidoreductase 2 (qorB) (Escherichia coli (strain K12)).